Reading from the N-terminus, the 255-residue chain is Small ribosomal subunit protein uS2 (255 aa).

The interval Ala-232 to Ala-255 is disordered.

It belongs to the universal ribosomal protein uS2 family.

In Sinorhizobium medicae (strain WSM419) (Ensifer medicae), this protein is Small ribosomal subunit protein uS2.